The sequence spans 317 residues: Probable porphobilinogen deaminase (317 aa).

The residue at position 234 (Cys234) is an S-(dipyrrolylmethanemethyl)cysteine.

It belongs to the HMBS family. Dipyrromethane serves as cofactor.

The catalysed reaction is 4 porphobilinogen + H2O = hydroxymethylbilane + 4 NH4(+). It functions in the pathway porphyrin-containing compound metabolism; protoporphyrin-IX biosynthesis; coproporphyrinogen-III from 5-aminolevulinate: step 2/4. In terms of biological role, tetrapolymerization of the monopyrrole PBG into the hydroxymethylbilane pre-uroporphyrinogen in several discrete steps. This Methanosarcina acetivorans (strain ATCC 35395 / DSM 2834 / JCM 12185 / C2A) protein is Probable porphobilinogen deaminase.